A 171-amino-acid chain; its full sequence is S-ribosylhomocysteine lyase (171 aa).

Residues histidine 54, histidine 58, and cysteine 128 each coordinate Fe cation.

It belongs to the LuxS family. Homodimer. It depends on Fe cation as a cofactor.

It carries out the reaction S-(5-deoxy-D-ribos-5-yl)-L-homocysteine = (S)-4,5-dihydroxypentane-2,3-dione + L-homocysteine. Involved in the synthesis of autoinducer 2 (AI-2) which is secreted by bacteria and is used to communicate both the cell density and the metabolic potential of the environment. The regulation of gene expression in response to changes in cell density is called quorum sensing. Catalyzes the transformation of S-ribosylhomocysteine (RHC) to homocysteine (HC) and 4,5-dihydroxy-2,3-pentadione (DPD). This Aliarcobacter butzleri (strain RM4018) (Arcobacter butzleri) protein is S-ribosylhomocysteine lyase.